The chain runs to 926 residues: Chitin synthase-like protein 2 (926 aa).

Positions 1 to 56 (MSFQNPSYINAKHRSFLQPKDTQDSQDLRNWVSHSSVDEETAYSSSTLSSSSSKSF) are disordered. Residues 44-55 (SSSTLSSSSSKS) are compositionally biased toward low complexity. The next 7 helical transmembrane spans lie at 564–584 (INSS…LWTT), 599–619 (LVFA…FLAF), 641–661 (LFLV…MLAM), 671–691 (LLFI…FCVF), 721–741 (LLIL…FFIF), 853–873 (VLVW…VFDG), and 885–905 (IFWS…TFIA).

The protein belongs to the chitin synthase family.

The protein localises to the membrane. Plays a role in septum formation. Has no chitin synthase activity. The protein is Chitin synthase-like protein 2 (chs2) of Schizosaccharomyces pombe (strain 972 / ATCC 24843) (Fission yeast).